Here is an 874-residue protein sequence, read N- to C-terminus: AP-1 complex subunit gamma-1 (874 aa).

The GAE domain maps to 761–873; that stretch reads TVAKSHTVYT…QDQTDWAQPS (113 aa).

Belongs to the adaptor complexes large subunit family. In terms of assembly, adaptor protein complex 1 (AP-1) is a heterotetramer composed of two large adaptins (gamma-type subunit APL4 and beta-type subunit APL2), a medium adaptin (mu-type subunit APM1) and a small adaptin (sigma-type subunit APS1). AP-1 interacts with clathrin.

It is found in the cytoplasmic vesicle. Its subcellular location is the clathrin-coated vesicle membrane. The protein localises to the golgi apparatus. In terms of biological role, adaptins are components of the adaptor complexes which link clathrin to receptors in coated vesicles. Clathrin-associated protein complexes are believed to interact with the cytoplasmic tails of membrane proteins, leading to their selection and concentration. The AP-1 complex interacts directly with clathrin. Required for apical growth extension. The sequence is that of AP-1 complex subunit gamma-1 (APL4) from Mycosarcoma maydis (Corn smut fungus).